The primary structure comprises 1158 residues: ATP-dependent helicase/deoxyribonuclease subunit B (1158 aa).

The region spanning 1 to 275 is the UvrD-like helicase ATP-binding domain; that stretch reads MTLHAYLGRA…QYFNQLYRFN (275 aa). 8–15 lines the ATP pocket; sequence GRAGTGKS. Residues 269–583 form the UvrD-like helicase C-terminal domain; it reads NQLYRFNNQD…SIGTMDLAKV (315 aa). 4 residues coordinate [4Fe-4S] cluster: Cys-784, Cys-1112, Cys-1115, and Cys-1121.

This sequence belongs to the helicase family. AddB/RexB type 1 subfamily. Heterodimer of AddA and AddB. The cofactor is Mg(2+). Requires [4Fe-4S] cluster as cofactor.

The heterodimer acts as both an ATP-dependent DNA helicase and an ATP-dependent, dual-direction single-stranded exonuclease. Recognizes the chi site generating a DNA molecule suitable for the initiation of homologous recombination. The AddB subunit has 5' -&gt; 3' nuclease activity but not helicase activity. The protein is ATP-dependent helicase/deoxyribonuclease subunit B of Staphylococcus aureus (strain USA300).